The chain runs to 258 residues: UPF0246 protein CJA_0191 (258 aa).

Belongs to the UPF0246 family.

In Cellvibrio japonicus (strain Ueda107) (Pseudomonas fluorescens subsp. cellulosa), this protein is UPF0246 protein CJA_0191.